Consider the following 436-residue polypeptide: Xylose isomerase (436 aa).

Active-site residues include His-100 and Asp-103. The Mg(2+) site is built by Glu-231, Glu-267, His-270, Asp-295, Asp-306, Asp-308, and Asp-338.

This sequence belongs to the xylose isomerase family. As to quaternary structure, homotetramer. Mg(2+) serves as cofactor.

It is found in the cytoplasm. It catalyses the reaction alpha-D-xylose = alpha-D-xylulofuranose. The polypeptide is Xylose isomerase (Ruegeria sp. (strain TM1040) (Silicibacter sp.)).